We begin with the raw amino-acid sequence, 890 residues long: V-type proton ATPase subunit a, Golgi isoform (890 aa).

Met1 is modified (N-acetylmethionine). The Cytoplasmic portion of the chain corresponds to Met1–Glu450. Positions Leu113–Ile154 form a coiled coil. Residues Ser223 and Ser228 each carry the phosphoserine modification. Positions Leu297–Leu347 form a coiled coil. The chain crosses the membrane as a helical span at residues Ile451–Phe469. Residues Gly470–Asp471 lie on the Vacuolar side of the membrane. The helical transmembrane segment at Met472–Asn488 threads the bilayer. At Glu489–Asp502 the chain is on the cytoplasmic side. Residues Met503–Ser532 traverse the membrane as a helical segment. At Met533–Ser580 the chain is on the vacuolar side. The helical transmembrane segment at Tyr581–Phe600 threads the bilayer. The Cytoplasmic segment spans residues Ser601–Phe618. Residues Ile619–Lys639 form a helical membrane-spanning segment. The Vacuolar segment spans residues Trp640–Val682. The chain crosses the membrane as a helical span at residues Leu683–Leu702. The Cytoplasmic portion of the chain corresponds to Arg703–Thr779. Residues Ile780 to Ala804 traverse the membrane as a helical segment. The Vacuolar portion of the chain corresponds to Gln805 to Leu828. Residues Ala829–Glu867 traverse the membrane as a helical segment. The Cytoplasmic portion of the chain corresponds to Ala868–Glu890.

Belongs to the V-ATPase 116 kDa subunit family. In terms of assembly, V-ATPase is a heteromultimeric enzyme composed of a peripheral catalytic V1 complex (components A to H) attached to an integral membrane V0 proton pore complex (components: a, c, c', c'', d, e, f and VOA1). In terms of processing, glycosylated.

The protein localises to the endosome membrane. The protein resides in the golgi apparatus membrane. Subunit of the V0 complex of vacuolar(H+)-ATPase (V-ATPase), a multisubunit enzyme composed of a peripheral complex (V1) that hydrolyzes ATP and a membrane integral complex (V0) that translocates protons. V-ATPase is responsible for acidifying and maintaining the pH of intracellular compartments. Is present only in Golgi- and endosome-residing V-ATPase complexes; enzymes containing this subunit have a 4-fold lower ratio of proton transport to ATP hydrolysis than complexes containing the vacuolar isoform and do not dissociate V1 and V0 in response to glucose depletion. This is V-type proton ATPase subunit a, Golgi isoform (STV1) from Saccharomyces cerevisiae (strain ATCC 204508 / S288c) (Baker's yeast).